The following is a 122-amino-acid chain: Large ribosomal subunit protein uL14 (122 aa).

It belongs to the universal ribosomal protein uL14 family. In terms of assembly, part of the 50S ribosomal subunit. Forms a cluster with proteins L3 and L19. In the 70S ribosome, L14 and L19 interact and together make contacts with the 16S rRNA in bridges B5 and B8.

Binds to 23S rRNA. Forms part of two intersubunit bridges in the 70S ribosome. In Clavibacter michiganensis subsp. michiganensis (strain NCPPB 382), this protein is Large ribosomal subunit protein uL14.